The sequence spans 1029 residues: Beta-galactosidase (1029 aa).

Positions 108 and 207 each coordinate substrate. A Na(+)-binding site is contributed by Asp207. The Mg(2+) site is built by Glu422, His424, and Glu467. Residues Glu467 and 543–546 contribute to the substrate site; that span reads EYAH. Glu467 functions as the Proton donor in the catalytic mechanism. The active-site Nucleophile is the Glu543. A Mg(2+)-binding site is contributed by Asn603. Positions 607 and 610 each coordinate Na(+). 2 residues coordinate substrate: Asn610 and Trp1005.

The protein belongs to the glycosyl hydrolase 2 family. Homotetramer. The cofactor is Mg(2+). Na(+) is required as a cofactor.

The catalysed reaction is Hydrolysis of terminal non-reducing beta-D-galactose residues in beta-D-galactosides.. The sequence is that of Beta-galactosidase from Escherichia coli.